The primary structure comprises 1304 residues: TPR-containing protein DDB_G0280363 (1304 aa).

6 disordered regions span residues 19-85, 153-195, 296-334, 447-477, 576-687, and 706-728; these read QQHH…HPQQ, NINN…NSSL, LPSTNSSIVSRQQQLQQQQQKLKLKSSPSPISPFFYTQQ, GFNWSPSLQPDQSTSTNHTQAMLQQQQQRQQ, QNQQ…VTTI, and LTTVNHSKPPPNESKRGELVESP. Low complexity-rich tracts occupy residues 25–44, 52–85, and 153–194; these read QQNNTQVQQQQQQHTTQFNQ, HQQHQQQQHHQQQHHQQQQQQQQQQQQQQQHPQQ, and NINN…NNSS. The span at 296–306 shows a compositional bias: polar residues; that stretch reads LPSTNSSIVSR. Positions 307-316 are enriched in low complexity; it reads QQQLQQQQQK. Polar residues predominate over residues 448-465; the sequence is FNWSPSLQPDQSTSTNHT. 2 stretches are compositionally biased toward low complexity: residues 466-477 and 576-597; these read QAMLQQQQQRQQ and QNQQQNQQQNQQQNQQHYPNQH. Basic residues predominate over residues 598-625; it reads HGQHQHNQHNQHHNQHHNQSHPNHKNQH. Residues 626 to 687 show a composition bias toward low complexity; the sequence is QKQNQTQQST…NNNTNNVTTI (62 aa). TPR repeat units follow at residues 769–802, 899–932, 978–1011, 1046–1079, 1084–1111, 1112–1150, and 1152–1184; these read WRVYLELADLANRQNNLKLARKFYRKVTSTQPYI, MKHVPWYGPIYQEAYKLEERCEEYERAINIVEKG, WKIYFEAAQIEERSKNLTLSRAAYVKSVELCPEN, SKLRSLVLLEYSRLEEYAGNINKSRRILKMAHVE, WKVFLESVLLEMRANNYEAAIKEAKESL, KIHSGAGRLWAALIQLNQLKGVKSQLNVFKKALQFVPKS, and EVWCEGARIALNNNELREARRFLEFAIQFTPQF.

The polypeptide is TPR-containing protein DDB_G0280363 (Dictyostelium discoideum (Social amoeba)).